Consider the following 213-residue polypeptide: MDTLWDISPPVSPATPVWPGDTPVSVERVWRMEAGSPVNVARLTLSPHTGAHCDAPLHYDADGAPIGAVPLDTYLGPCRVIHCIGAAPVVRPADIEAALDGVPPRVLLRTYARASVEQWDSGFCAVAPETVDLLAARGVKLIGIDTPSLDPQESKTMDAHHRVRAHRMAILEGIVLDDVPPGDYELIALPLKFTTLDASPVRAVLRALPGHSA.

Residue W18 participates in substrate binding. Residues H48, H52, and D54 each contribute to the Zn(2+) site. Catalysis depends on H58, which acts as the Proton donor/acceptor. Residues H160 and E172 each contribute to the Zn(2+) site.

It belongs to the Cyclase 1 superfamily. KynB family. In terms of assembly, homodimer. The cofactor is Zn(2+).

The enzyme catalyses N-formyl-L-kynurenine + H2O = L-kynurenine + formate + H(+). The protein operates within amino-acid degradation; L-tryptophan degradation via kynurenine pathway; L-kynurenine from L-tryptophan: step 2/2. In terms of biological role, catalyzes the hydrolysis of N-formyl-L-kynurenine to L-kynurenine, the second step in the kynurenine pathway of tryptophan degradation. This is Kynurenine formamidase from Burkholderia ambifaria (strain MC40-6).